Reading from the N-terminus, the 314-residue chain is Methionyl-tRNA formyltransferase (314 aa).

112–115 (SLLP) contacts (6S)-5,6,7,8-tetrahydrofolate.

Belongs to the Fmt family.

It catalyses the reaction L-methionyl-tRNA(fMet) + (6R)-10-formyltetrahydrofolate = N-formyl-L-methionyl-tRNA(fMet) + (6S)-5,6,7,8-tetrahydrofolate + H(+). Its function is as follows. Attaches a formyl group to the free amino group of methionyl-tRNA(fMet). The formyl group appears to play a dual role in the initiator identity of N-formylmethionyl-tRNA by promoting its recognition by IF2 and preventing the misappropriation of this tRNA by the elongation apparatus. The sequence is that of Methionyl-tRNA formyltransferase from Legionella pneumophila (strain Paris).